A 118-amino-acid polypeptide reads, in one-letter code: Large ribosomal subunit protein bL20 (118 aa).

This sequence belongs to the bacterial ribosomal protein bL20 family.

Functionally, binds directly to 23S ribosomal RNA and is necessary for the in vitro assembly process of the 50S ribosomal subunit. It is not involved in the protein synthesizing functions of that subunit. The polypeptide is Large ribosomal subunit protein bL20 (Parvibaculum lavamentivorans (strain DS-1 / DSM 13023 / NCIMB 13966)).